The following is a 758-amino-acid chain: 5-methyltetrahydropteroyltriglutamate--homocysteine methyltransferase (758 aa).

Residues 16–19 (RELK) and Lys-116 each bind 5-methyltetrahydropteroyltri-L-glutamate. L-homocysteine is bound by residues 436–438 (IGS) and Glu-489. L-methionine is bound by residues 436–438 (IGS) and Glu-489. 5-methyltetrahydropteroyltri-L-glutamate-binding positions include 520–521 (RC) and Trp-566. Asp-604 contributes to the L-homocysteine binding site. An L-methionine-binding site is contributed by Asp-604. 5-methyltetrahydropteroyltri-L-glutamate is bound at residue Glu-610. 3 residues coordinate Zn(2+): His-646, Cys-648, and Glu-670. His-699 serves as the catalytic Proton donor. Position 731 (Cys-731) interacts with Zn(2+).

This sequence belongs to the vitamin-B12 independent methionine synthase family. It depends on Zn(2+) as a cofactor.

The catalysed reaction is 5-methyltetrahydropteroyltri-L-glutamate + L-homocysteine = tetrahydropteroyltri-L-glutamate + L-methionine. It functions in the pathway amino-acid biosynthesis; L-methionine biosynthesis via de novo pathway; L-methionine from L-homocysteine (MetE route): step 1/1. Functionally, catalyzes the transfer of a methyl group from 5-methyltetrahydrofolate to homocysteine resulting in methionine formation. This Nitrosococcus oceani (strain ATCC 19707 / BCRC 17464 / JCM 30415 / NCIMB 11848 / C-107) protein is 5-methyltetrahydropteroyltriglutamate--homocysteine methyltransferase.